A 263-amino-acid polypeptide reads, in one-letter code: Palmitoyltransferase ZDHHC22 (263 aa).

Residues 1–9 (MLALRLLNV) lie on the Cytoplasmic side of the membrane. A helical membrane pass occupies residues 10-30 (VAPAYFLCISLVTFVLQLFLF). The Lumenal segment spans residues 31 to 48 (LPSMREDPAAARLFSPAL). The chain crosses the membrane as a helical span at residues 49–69 (LHGALFLFLSANALGNYVLVI). At 70–125 (QNSPDDLGACQGASARKTPCPSPSTHFCRVCARVTLRHDHHCFFTGNCIGSRNMRN) the chain is on the cytoplasmic side. The DHHC domain occupies 92–131 (PSTHFCRVCARVTLRHDHHCFFTGNCIGSRNMRNFVLFCL). Catalysis depends on C111, which acts as the S-palmitoyl cysteine intermediate. 2 helical membrane-spanning segments follow: residues 126-146 (FVLF…AGVA) and 147-167 (YISA…TLLP). Residues 168–182 (TSISQFFSGAVLGSE) lie on the Cytoplasmic side of the membrane. Residues 183 to 203 (MFVILMLYLWFAIGLACAGFC) traverse the membrane as a helical segment. Topologically, residues 204-263 (CHQLLLILRGQTRHQVRKGVAVRARPWRKNLQEVFGKRWLLGLLVPMFNVGSESSKQQDK) are lumenal.

It belongs to the DHHC palmitoyltransferase family. In terms of assembly, interacts with CNN3. In terms of tissue distribution, widely expressed.

The protein localises to the endoplasmic reticulum membrane. It localises to the golgi apparatus membrane. It catalyses the reaction L-cysteinyl-[protein] + hexadecanoyl-CoA = S-hexadecanoyl-L-cysteinyl-[protein] + CoA. Its function is as follows. Palmitoyltransferase that could catalyze the addition of palmitate onto various protein substrates and be involved in a variety of cellular processes. Catalyzes the palmitoylation of KCNMA1, regulating localization of KCNMA1 to the plasma membrane. Might also mediate palmitoylation of CNN3. The chain is Palmitoyltransferase ZDHHC22 from Homo sapiens (Human).